We begin with the raw amino-acid sequence, 501 residues long: Lysine--tRNA ligase (501 aa).

Mg(2+)-binding residues include Glu411 and Glu418.

This sequence belongs to the class-II aminoacyl-tRNA synthetase family. In terms of assembly, homodimer. Mg(2+) is required as a cofactor.

Its subcellular location is the cytoplasm. The enzyme catalyses tRNA(Lys) + L-lysine + ATP = L-lysyl-tRNA(Lys) + AMP + diphosphate. The chain is Lysine--tRNA ligase from Pseudomonas aeruginosa (strain UCBPP-PA14).